The sequence spans 76 residues: VpAmp1.0 (76 aa).

A signal peptide spans 1–22 (MKLINLVPVFFVLIIVVDYCHS). Ile41 bears the Isoleucine amide mark. The propeptide occupies 42 to 76 (GKRSVESQRYVDLNRRDLEQDLQELQDFLDQISEH).

Belongs to the non-disulfide-bridged peptide (NDBP) superfamily. Short antimicrobial peptide (group 4) family. Expressed by the venom gland.

It is found in the secreted. It localises to the target cell membrane. Its function is as follows. Antimicrobial peptide with potent activity against Gram-positive bacteria S.aureus (MIC=2.5 uM) and S.agalactiaea (MIC=2.5 uM), and Gram-negative bacteria E.coli (MIC=24 uM) and P.aeruginosa (MIC=2.5 uM), as well as against yeasts Candida albicans (MIC=6.25 uM) and C.glabrata (MIC&gt;50 uM). Also elicits high hemolysis on human erythrocytes (HC(50)=9.2 uM). This Mesomexovis punctatus (Scorpion) protein is VpAmp1.0.